We begin with the raw amino-acid sequence, 259 residues long: Transmembrane protein 81 (259 aa).

An N-terminal signal peptide occupies residues 1–18; sequence MALSTLWLVLMLWTSLFS. Residues 19-221 lie on the Extracellular side of the membrane; that stretch reads DSQCSTLSQA…KVYSSSTIRN (203 aa). Positions 97–172 constitute an Ig-like domain; the sequence is GRRLVLDCLE…VLDTGKRRVK (76 aa). A disulfide bridge links C104 with C161. A helical membrane pass occupies residues 222-242; it reads IVIISVPLSFAIAVVIFIFLF. Residues 243–259 are Cytoplasmic-facing; that stretch reads CYSRRARRAAHLCQDNI.

As to quaternary structure, forms a complex with izumo1 and spaca6 on spermatocyte cell membrane. The complex binds to oocyte protein bncr. Expressed in sperm.

The protein localises to the cell membrane. In terms of biological role, essential fertilization factor required for male fertility. Part of a conserved trimeric sperm complex with the essential fertilization factors IZUMO1 and SPACA6 which bridges sperm and oocyte membranes during fertilization by binding to IZUMO1R/JUNO on the oocyte. The chain is Transmembrane protein 81 from Danio rerio (Zebrafish).